We begin with the raw amino-acid sequence, 454 residues long: Bifunctional protein GlmU (454 aa).

The tract at residues 1-228 is pyrophosphorylase; that stretch reads MTLPLHVVIL…PQHVEGANDP (228 aa). UDP-N-acetyl-alpha-D-glucosamine is bound by residues 10-13, Lys24, Gln76, 81-82, 103-105, Gly138, Glu153, Asn168, and Asn226; these read LAAG, GT, and YGD. Asp105 lines the Mg(2+) pocket. Asn226 lines the Mg(2+) pocket. A linker region spans residues 229–249; it reads WQLAQLERAWQLRAARTLCLQ. Residues 250-454 are N-acetyltransferase; the sequence is GVRMADPARV…IEGWKRPTKK (205 aa). UDP-N-acetyl-alpha-D-glucosamine is bound by residues Arg332 and Lys350. The active-site Proton acceptor is His362. 2 residues coordinate UDP-N-acetyl-alpha-D-glucosamine: Tyr365 and Asn376. Residues Ala379, 385 to 386, Ser404, Ala422, and Arg439 contribute to the acetyl-CoA site; that span reads NY.

It in the N-terminal section; belongs to the N-acetylglucosamine-1-phosphate uridyltransferase family. This sequence in the C-terminal section; belongs to the transferase hexapeptide repeat family. In terms of assembly, homotrimer. The cofactor is Mg(2+).

It is found in the cytoplasm. The catalysed reaction is alpha-D-glucosamine 1-phosphate + acetyl-CoA = N-acetyl-alpha-D-glucosamine 1-phosphate + CoA + H(+). It carries out the reaction N-acetyl-alpha-D-glucosamine 1-phosphate + UTP + H(+) = UDP-N-acetyl-alpha-D-glucosamine + diphosphate. It participates in nucleotide-sugar biosynthesis; UDP-N-acetyl-alpha-D-glucosamine biosynthesis; N-acetyl-alpha-D-glucosamine 1-phosphate from alpha-D-glucosamine 6-phosphate (route II): step 2/2. The protein operates within nucleotide-sugar biosynthesis; UDP-N-acetyl-alpha-D-glucosamine biosynthesis; UDP-N-acetyl-alpha-D-glucosamine from N-acetyl-alpha-D-glucosamine 1-phosphate: step 1/1. It functions in the pathway bacterial outer membrane biogenesis; LPS lipid A biosynthesis. Its function is as follows. Catalyzes the last two sequential reactions in the de novo biosynthetic pathway for UDP-N-acetylglucosamine (UDP-GlcNAc). The C-terminal domain catalyzes the transfer of acetyl group from acetyl coenzyme A to glucosamine-1-phosphate (GlcN-1-P) to produce N-acetylglucosamine-1-phosphate (GlcNAc-1-P), which is converted into UDP-GlcNAc by the transfer of uridine 5-monophosphate (from uridine 5-triphosphate), a reaction catalyzed by the N-terminal domain. The polypeptide is Bifunctional protein GlmU (Xanthomonas euvesicatoria pv. vesicatoria (strain 85-10) (Xanthomonas campestris pv. vesicatoria)).